The primary structure comprises 381 residues: Ceramide-binding protein svf-1 (381 aa).

Positions 1–18 are peripherally associates with membranes; the sequence is MFKWAQAALANVAGTKEP.

It belongs to the SVF1 family.

Its subcellular location is the golgi apparatus. It is found in the cis-Golgi network membrane. The protein resides in the endoplasmic reticulum membrane. It localises to the cytoplasm. The protein localises to the nucleus. Its function is as follows. Ceramide-binding protein that may transfer ceramides from the endoplasmic reticulum membrane to the cis-Golgi network membrane, and is thereby required for the biosynthesis of complex sphingolipids. The polypeptide is Ceramide-binding protein svf-1 (svf-1) (Neurospora crassa (strain ATCC 24698 / 74-OR23-1A / CBS 708.71 / DSM 1257 / FGSC 987)).